The chain runs to 317 residues: uncharacterized protein (317 aa).

Positions 1 to 11 (MASAGAERRPG) are enriched in basic and acidic residues. A disordered region spans residues 1–164 (MASAGAERRP…KAKKRKSLGA (164 aa)). A compositionally biased stretch (polar residues) spans 19-34 (GQGQLTEEPGSAQTSE). 2 stretches are compositionally biased toward basic and acidic residues: residues 47 to 58 (HEARGTQSEDQR) and 71 to 92 (EGPKLGEERPKPHAGALEERGP). 2 stretches are compositionally biased toward basic residues: residues 100–110 (RPRHGPKRKPV) and 151–161 (KQHKKAKKRKS).

This is an uncharacterized protein from Homo sapiens (Human).